A 98-amino-acid polypeptide reads, in one-letter code: NADH-ubiquinone oxidoreductase chain 4L (98 aa).

3 helical membrane passes run methionine 1–valine 21, leucine 30–threonine 50, and isoleucine 61–isoleucine 81.

It belongs to the complex I subunit 4L family. As to quaternary structure, core subunit of respiratory chain NADH dehydrogenase (Complex I) which is composed of 45 different subunits.

The protein localises to the mitochondrion inner membrane. It catalyses the reaction a ubiquinone + NADH + 5 H(+)(in) = a ubiquinol + NAD(+) + 4 H(+)(out). Its function is as follows. Core subunit of the mitochondrial membrane respiratory chain NADH dehydrogenase (Complex I) which catalyzes electron transfer from NADH through the respiratory chain, using ubiquinone as an electron acceptor. Part of the enzyme membrane arm which is embedded in the lipid bilayer and involved in proton translocation. This is NADH-ubiquinone oxidoreductase chain 4L (MT-ND4L) from Lontra canadensis (North American river otter).